The chain runs to 594 residues: Proteasome-associated ATPase (594 aa).

Residues 20–98 (DDLAAQVTYL…KEEIDRLAQP (79 aa)) are a coiled coil. 282-287 (GCGKTL) is an ATP binding site. The interval 593–594 (YL) is docks into pockets in the proteasome alpha-ring.

Belongs to the AAA ATPase family. Homohexamer. Assembles into a hexameric ring structure that caps the 20S proteasome core. Strongly interacts with the prokaryotic ubiquitin-like protein Pup through a hydrophobic interface; the interacting region of ARC lies in its N-terminal coiled-coil domain. There is one Pup binding site per ARC hexamer ring. Upon ATP-binding, the C-terminus of ARC interacts with the alpha-rings of the proteasome core, possibly by binding to the intersubunit pockets.

It functions in the pathway protein degradation; proteasomal Pup-dependent pathway. In terms of biological role, ATPase which is responsible for recognizing, binding, unfolding and translocation of pupylated proteins into the bacterial 20S proteasome core particle. May be essential for opening the gate of the 20S proteasome via an interaction with its C-terminus, thereby allowing substrate entry and access to the site of proteolysis. Thus, the C-termini of the proteasomal ATPase may function like a 'key in a lock' to induce gate opening and therefore regulate proteolysis. This chain is Proteasome-associated ATPase, found in Catenulispora acidiphila (strain DSM 44928 / JCM 14897 / NBRC 102108 / NRRL B-24433 / ID139908).